A 260-amino-acid polypeptide reads, in one-letter code: Transcription repressor OFP13 (260 aa).

The region spanning 150–211 (VAMESEDPYG…VSAFVDLLSG (62 aa)) is the OVATE domain.

As to expression, expressed in roots, rosette and cauline leaves, shoots, stems, flower buds and siliques.

Its subcellular location is the nucleus. Its function is as follows. Transcriptional repressor that regulates multiple aspects of plant growth and development through the regulation of BEL1-LIKE (BLH) and KNOX TALE (KNAT) homeodomain transcription factors. This is Transcription repressor OFP13 (OFP13) from Arabidopsis thaliana (Mouse-ear cress).